The chain runs to 589 residues: DNA mismatch repair protein MutL (589 aa).

Disordered regions lie at residues 330-355 (LQRR…SHRE) and 374-394 (RIYE…SEPT). Basic and acidic residues predominate over residues 331–341 (QRREAPQRPEP). The segment covering 381 to 390 (PYRPPEPPAA) has biased composition (pro residues).

This sequence belongs to the DNA mismatch repair MutL/HexB family.

Functionally, this protein is involved in the repair of mismatches in DNA. It is required for dam-dependent methyl-directed DNA mismatch repair. May act as a 'molecular matchmaker', a protein that promotes the formation of a stable complex between two or more DNA-binding proteins in an ATP-dependent manner without itself being part of a final effector complex. This chain is DNA mismatch repair protein MutL, found in Trichlorobacter lovleyi (strain ATCC BAA-1151 / DSM 17278 / SZ) (Geobacter lovleyi).